The primary structure comprises 433 residues: Enolase (433 aa).

Position 167 (glutamine 167) interacts with (2R)-2-phosphoglycerate. Glutamate 209 acts as the Proton donor in catalysis. Mg(2+) contacts are provided by aspartate 246, glutamate 291, and aspartate 318. At lysine 326 the chain carries N6-acetyllysine. (2R)-2-phosphoglycerate-binding residues include lysine 343, arginine 372, serine 373, and lysine 394. The Proton acceptor role is filled by lysine 343. At lysine 343 the chain carries N6-(2-hydroxyisobutyryl)lysine.

Belongs to the enolase family. Component of the RNA degradosome, a multiprotein complex involved in RNA processing and mRNA degradation. It depends on Mg(2+) as a cofactor. Post-translationally, acetylated and 2-hydroxyisobutyrylated at Lys-326 and Lys-343, respectively, reducing the enolase activity. Deacetylated and de-2-hydroxyisobutyrylated by NpdA/CobB, increasing the enolase activity.

The protein resides in the cytoplasm. It is found in the secreted. It localises to the cell surface. It carries out the reaction (2R)-2-phosphoglycerate = phosphoenolpyruvate + H2O. Its pathway is carbohydrate degradation; glycolysis; pyruvate from D-glyceraldehyde 3-phosphate: step 4/5. In terms of biological role, catalyzes the reversible conversion of 2-phosphoglycerate (2-PG) into phosphoenolpyruvate (PEP). It is essential for the degradation of carbohydrates via glycolysis. In Proteus mirabilis (strain HI4320), this protein is Enolase.